The chain runs to 299 residues: Acetyl-coenzyme A carboxylase carboxyl transferase subunit beta (299 aa).

The region spanning 25-294 (VWTKCTSCEQ…PFVEPELIQE (270 aa)) is the CoA carboxyltransferase N-terminal domain. Cys-29, Cys-32, Cys-48, and Cys-51 together coordinate Zn(2+). The segment at 29-51 (CTSCEQVLYRDELKRHLEVCPKC) adopts a C4-type zinc-finger fold.

It belongs to the AccD/PCCB family. As to quaternary structure, acetyl-CoA carboxylase is a heterohexamer composed of biotin carboxyl carrier protein (AccB), biotin carboxylase (AccC) and two subunits each of ACCase subunit alpha (AccA) and ACCase subunit beta (AccD). Zn(2+) serves as cofactor.

It localises to the cytoplasm. It carries out the reaction N(6)-carboxybiotinyl-L-lysyl-[protein] + acetyl-CoA = N(6)-biotinyl-L-lysyl-[protein] + malonyl-CoA. It functions in the pathway lipid metabolism; malonyl-CoA biosynthesis; malonyl-CoA from acetyl-CoA: step 1/1. Component of the acetyl coenzyme A carboxylase (ACC) complex. Biotin carboxylase (BC) catalyzes the carboxylation of biotin on its carrier protein (BCCP) and then the CO(2) group is transferred by the transcarboxylase to acetyl-CoA to form malonyl-CoA. The sequence is that of Acetyl-coenzyme A carboxylase carboxyl transferase subunit beta from Histophilus somni (strain 129Pt) (Haemophilus somnus).